We begin with the raw amino-acid sequence, 443 residues long: Serine/threonine-protein phosphatase 2A 55 kDa regulatory subunit B beta isoform (443 aa).

4 WD repeats span residues 22–61 (TEADIISTVEFNHTGELLATGDKGGRVVIFQREQESKNQV), 87–128 (EIEE…KRPE), 171–209 (AHTYHINSISVNSDYETYMSADDLRINLWNFEITNQSFN), and 220–260 (ELTE…LCDR). Residue serine 275 is modified to Phosphoserine. WD repeat units follow at residues 279-317 (EIISSISDVKFSHSGRYIMTRDYLTVKVWDLNMENRPIE), 334-375 (ENDC…DVTL), and 410-442 (DFSKKILHTAWHPSENIIAVAATNNLYIFQDKV). Phosphotyrosine is present on tyrosine 295. Threonine 298 is subject to Phosphothreonine.

This sequence belongs to the phosphatase 2A regulatory subunit B family. As to quaternary structure, PP2A consists of a common heterodimeric core enzyme, composed of a 36 kDa catalytic subunit (subunit C) and a 65 kDa constant regulatory subunit (PR65 or subunit A), that associates with a variety of regulatory subunits. Proteins that associate with the core dimer include three families of regulatory subunits B (the R2/B/PR55/B55, R3/B''/PR72/PR130/PR59 and R5/B'/B56 families), the 48 kDa variable regulatory subunit, viral proteins, and cell signaling molecules. Interacts with TOMM22. Interacts with IER5 (via N- and C-terminal regions).

The protein localises to the cytoplasm. It localises to the cytoskeleton. It is found in the membrane. In terms of biological role, the B regulatory subunit might modulate substrate selectivity and catalytic activity, and might also direct the localization of the catalytic enzyme to a particular subcellular compartment. The sequence is that of Serine/threonine-protein phosphatase 2A 55 kDa regulatory subunit B beta isoform (PPP2R2B) from Bos taurus (Bovine).